The chain runs to 334 residues: Putative transport protein MJ1177 (334 aa).

Helical transmembrane passes span 13 to 33, 61 to 81, 138 to 158, 191 to 211, 234 to 254, 259 to 279, and 293 to 313; these read VIVGLLIMLLYIIWPFIDVLA, LAISIYILPIMTITIYALLTF, IIDVGYLIVKVIMVLFLTFYF, SYKNLFISCVSLSIIITILSY, LLPILGGWMVYISIAIYFFLI, KAVFMFIYGELFLSIAPDFVI, and VLVVIAFLMAPLSLGLSGFAI.

It belongs to the autoinducer-2 exporter (AI-2E) (TC 2.A.86) family.

The protein localises to the cell membrane. The chain is Putative transport protein MJ1177 from Methanocaldococcus jannaschii (strain ATCC 43067 / DSM 2661 / JAL-1 / JCM 10045 / NBRC 100440) (Methanococcus jannaschii).